A 231-amino-acid polypeptide reads, in one-letter code: Large ribosomal subunit protein uL1 (231 aa).

Belongs to the universal ribosomal protein uL1 family. As to quaternary structure, part of the 50S ribosomal subunit.

Its function is as follows. Binds directly to 23S rRNA. The L1 stalk is quite mobile in the ribosome, and is involved in E site tRNA release. In terms of biological role, protein L1 is also a translational repressor protein, it controls the translation of the L11 operon by binding to its mRNA. The protein is Large ribosomal subunit protein uL1 of Azoarcus sp. (strain BH72).